Here is a 940-residue protein sequence, read N- to C-terminus: MAESSAATQSPSVSSSSSGAEPSTLGGGGGSPGACPALGAKSCGSSCAVGLSSLCSDEPPSKIMTSSFLSSSEIYNPDPTTPLGSETLGSHLVAKDGKDPLVLLDKKTLDSPQGTNKDRVDTPVSLAADIPCSHPSIPDSFPEQPTFLSKETDPTEEWVVKNQEPKNPSEVPSGEDRSALDLGQRKAEHICTHSLSPSEPAVASVEKDSPESPFEVIIDKATFDREFKDLYKESTDDLGGWAAHGDRESPADLLEMNDKVFPLRNKEAGRYPSSALLGRQFSHTTAALEEVSRCVNDMHNFTNEILTWDLDPQAKQQADKSPCTTESTGLDRSEHRSEIPVINLKTSPQQKMPVCSFNGSTPITRSTGDWTETFTEGKPVKGYLSSTKEAGGKGVPDSSQPISGSGAATVEVTLPDLRGTWPNSVLGEVTEVDSSGESDDTVIEDTTENPSVKNNKVLPEKSDSLPSAAVKTSERENKETTSHETVRSEMYENSEQQQAHAETPTQRSLEGQMSPQVPNMLNEVIPENLAMTDTTRVCSAAPPSVLSETGFSLTVPASAKSESLLGKNVEDTDGSSPEDLMAALTGTEEKGTVDKEKGDVLEAVLEKIANVKNTLPVELLHENKLSSSETKNTKSKYSEHSRETNGGAPKVSSDLEQEQLTIRAIKELGAKQVQAERMSPGGKLKRTFDPQSGPQNSSDILEHTDITTGSDLGIPKKPTIIKDTRIDSISSLTKTETVNKHVLARLLSDFPVHDLIFWRDVKKTGFVFGTTLIMLLSLAAFSVISVVSYLILALLSVTISFRVYKSVIQAVQKSEEGHPFKAYLDVDITLSSEAFHSYMNAAMVHVNKALKLIIRLFLVEDLVDSLKLAVFMWLMTYVGAVFNGITLLILAELLVFSVPIVYEKYKTQIDHYVGIARDQTKSIVEKIQAKLPGIAKKKAE.

The span at 1–24 (MAESSAATQSPSVSSSSSGAEPST) shows a compositional bias: low complexity. Disordered regions lie at residues 1 to 32 (MAESSAATQSPSVSSSSSGAEPSTLGGGGGSP), 71 to 91 (SSEIYNPDPTTPLGSETLGSH), and 129 to 182 (DIPC…ALDL). Residue A2 is modified to N-acetylalanine. At 2-771 (AESSAATQSP…KKTGFVFGTT (770 aa)) the chain is on the cytoplasmic side. Position 31 is a phosphoserine (S31). Phosphoserine is present on residues S196, S204, S209, S212, S249, and S282. Disordered regions lie at residues 314 to 335 (AKQQADKSPCTTESTGLDRSEH), 381 to 405 (KGYLSSTKEAGGKGVPDSSQPISGS), and 428 to 512 (EVTE…LEGQ). A compositionally biased stretch (acidic residues) spans 430 to 447 (TEVDSSGESDDTVIEDTT). The segment covering 472–490 (TSERENKETTSHETVRSEM) has biased composition (basic and acidic residues). The span at 491 to 512 (YENSEQQQAHAETPTQRSLEGQ) shows a compositional bias: polar residues. S508 is modified (phosphoserine). At T572 the chain carries Phosphothreonine. S575, S576, and S652 each carry phosphoserine. Disordered regions lie at residues 623–655 (NKLSSSETKNTKSKYSEHSRETNGGAPKVSSDL) and 672–701 (QVQAERMSPGGKLKRTFDPQSGPQNSSDIL). A compositionally biased stretch (polar residues) spans 689–699 (DPQSGPQNSSD). The Reticulon domain maps to 752–940 (VHDLIFWRDV…LPGIAKKKAE (189 aa)). An intramembrane region (helical) is located at residues 772 to 795 (LIMLLSLAAFSVISVVSYLILALL). Residues 796 to 852 (SVTISFRVYKSVIQAVQKSEEGHPFKAYLDVDITLSSEAFHSYMNAAMVHVNKALKL) lie on the Cytoplasmic side of the membrane. The segment at residues 853–875 (IIRLFLVEDLVDSLKLAVFMWLM) is an intramembrane region (helical). At 876–879 (TYVG) the chain is on the cytoplasmic side. The helical intramembrane region spans 880 to 902 (AVFNGITLLILAELLVFSVPIVY). Positions 895–940 (VFSVPIVYEKYKTQIDHYVGIARDQTKSIVEKIQAKLPGIAKKKAE) are interaction with FADD. Topologically, residues 903-940 (EKYKTQIDHYVGIARDQTKSIVEKIQAKLPGIAKKKAE) are cytoplasmic. Residues 908–910 (QID) are interaction with BACE1.

As to quaternary structure, homodimer. Interacts with RTN4. Isoform 2 interacts with BACE1, BACE2, BCL2 and FADD. Interacts with ATL2. Interacts with TMEM33. Interacts with ATL1. Interacts with ZFYVE27 and with KIF5A in a ZFYVE27-dependent manner. Interacts with RIGI. Interacts with TRIM25. In terms of tissue distribution, present in olfactory bulb, olfactory epithelium and retina (at protein level).

It is found in the endoplasmic reticulum membrane. The protein resides in the golgi apparatus membrane. Functionally, may be involved in membrane trafficking in the early secretory pathway. Inhibits BACE1 activity and amyloid precursor protein processing. May induce caspase-8 cascade and apoptosis. May favor BCL2 translocation to the mitochondria upon endoplasmic reticulum stress. Induces the formation of endoplasmic reticulum tubules. Acts also as an inflammation-resolving regulator by interacting with both TRIM25 and RIGI, subsequently impairing RIGI 'Lys-63'-linked polyubiquitination leading to IRF3 and NF-kappa-B inhibition. The sequence is that of Reticulon-3 (Rtn3) from Rattus norvegicus (Rat).